The chain runs to 659 residues: Chaperone protein DnaK (659 aa).

T201 carries the phosphothreonine; by autocatalysis modification. Residues 571–592 are compositionally biased toward basic and acidic residues; sequence RSALKEDAPTEKIKEASDELSR. The disordered stretch occupies residues 571-659; the sequence is RSALKEDAPT…DVEIVDKPND (89 aa). Low complexity predominate over residues 600-613; that stretch reads AMQSQSASAAANAQ.

The protein belongs to the heat shock protein 70 family.

In terms of biological role, acts as a chaperone. The protein is Chaperone protein DnaK of Chlamydia abortus (strain DSM 27085 / S26/3) (Chlamydophila abortus).